We begin with the raw amino-acid sequence, 247 residues long: Uridylate kinase (247 aa).

K18–G21 lines the ATP pocket. G60 provides a ligand contact to UMP. ATP-binding residues include G61 and R65. UMP contacts are provided by residues D80 and T141 to T148. The ATP site is built by T168, Y174, and D177.

This sequence belongs to the UMP kinase family. Homohexamer.

The protein localises to the cytoplasm. The enzyme catalyses UMP + ATP = UDP + ADP. The protein operates within pyrimidine metabolism; CTP biosynthesis via de novo pathway; UDP from UMP (UMPK route): step 1/1. Inhibited by UTP. Functionally, catalyzes the reversible phosphorylation of UMP to UDP. This is Uridylate kinase from Pseudomonas fluorescens (strain ATCC BAA-477 / NRRL B-23932 / Pf-5).